Consider the following 270-residue polypeptide: Interleukin-2 receptor subunit alpha (270 aa).

The signal sequence occupies residues 1–21; it reads MEPSLLMWGFFTFTMIPGCMA. A Sushi 1 domain is found at 22–84; that stretch reads GACVQQPPSL…FWENKCQCMP (63 aa). The Extracellular portion of the chain corresponds to 22–245; that stretch reads GACVQQPPSL…QPIIFTTQYQ (224 aa). 3 disulfide bridges follow: Cys24–Cys67, Cys49–Cys80, and Cys51–Cys82. N-linked (GlcNAc...) asparagine glycans are attached at residues Asn33 and Asn70. Positions 87 to 124 are disordered; it reads SPRIPVKQVTPRPEEQKERKTTETQGQMQPPNQANLPG. Positions 98–108 are enriched in basic and acidic residues; the sequence is RPEEQKERKTT. A compositionally biased stretch (polar residues) spans 112 to 121; the sequence is GQMQPPNQAN. In terms of domain architecture, Sushi 2 spans 124–191; sequence GHCKEPPPWE…WTQPKLKCKS (68 aa). Intrachain disulfides connect Cys126–Cys171 and Cys153–Cys189. N-linked (GlcNAc...) asparagine glycans are attached at residues Asn164 and Asn195. The segment at 190 to 225 is disordered; that stretch reads KSEKENGSFPEPQMSTAAPPTTKTSLPTRTKGTTDS. The segment covering 202-225 has biased composition (polar residues); that stretch reads QMSTAAPPTTKTSLPTRTKGTTDS. Asn227 is a glycosylation site (N-linked (GlcNAc...) asparagine). The helical transmembrane segment at 246–264 threads the bilayer; that stretch reads LAVAGCVLLLLSILLLSGL. At 265 to 270 the chain is on the cytoplasmic side; sequence TWQRRR.

In terms of assembly, non-covalent dimer of an alpha and a beta subunit. IL2R exists in 3 different forms: a high affinity dimer, an intermediate affinity monomer (beta subunit), and a low affinity monomer (alpha subunit). The high and intermediate affinity forms also associate with a gamma subunit.

It localises to the membrane. Receptor for interleukin-2. The receptor is involved in the regulation of immune tolerance by controlling regulatory T cells (TREGs) activity. TREGs suppress the activation and expansion of autoreactive T-cells. The chain is Interleukin-2 receptor subunit alpha (IL2RA) from Sus scrofa (Pig).